Here is a 177-residue protein sequence, read N- to C-terminus: Bifunctional protein PyrR (177 aa).

Positions 97–109 match the PRPP-binding motif; sequence IILVDDVLYTGRT.

Belongs to the purine/pyrimidine phosphoribosyltransferase family. PyrR subfamily.

The catalysed reaction is UMP + diphosphate = 5-phospho-alpha-D-ribose 1-diphosphate + uracil. In terms of biological role, regulates the transcription of the pyrimidine nucleotide (pyr) operon in response to exogenous pyrimidines. Functionally, also displays a weak uracil phosphoribosyltransferase activity which is not physiologically significant. The chain is Bifunctional protein PyrR from Nitrosococcus oceani (strain ATCC 19707 / BCRC 17464 / JCM 30415 / NCIMB 11848 / C-107).